Here is a 342-residue protein sequence, read N- to C-terminus: 4-hydroxy-3-methylbut-2-enyl diphosphate reductase (342 aa).

Cys-47 contributes to the [4Fe-4S] cluster binding site. Residues His-78 and His-111 each contribute to the (2E)-4-hydroxy-3-methylbut-2-enyl diphosphate site. Dimethylallyl diphosphate-binding residues include His-78 and His-111. Residues His-78 and His-111 each coordinate isopentenyl diphosphate. Cys-133 is a binding site for [4Fe-4S] cluster. His-161 provides a ligand contact to (2E)-4-hydroxy-3-methylbut-2-enyl diphosphate. His-161 contributes to the dimethylallyl diphosphate binding site. An isopentenyl diphosphate-binding site is contributed by His-161. Glu-163 serves as the catalytic Proton donor. Thr-201 contacts (2E)-4-hydroxy-3-methylbut-2-enyl diphosphate. Position 231 (Cys-231) interacts with [4Fe-4S] cluster. Ser-259, Ser-260, Asn-261, and Ser-303 together coordinate (2E)-4-hydroxy-3-methylbut-2-enyl diphosphate. The dimethylallyl diphosphate site is built by Ser-259, Ser-260, Asn-261, and Ser-303. The isopentenyl diphosphate site is built by Ser-259, Ser-260, Asn-261, and Ser-303.

The protein belongs to the IspH family. It depends on [4Fe-4S] cluster as a cofactor.

The enzyme catalyses isopentenyl diphosphate + 2 oxidized [2Fe-2S]-[ferredoxin] + H2O = (2E)-4-hydroxy-3-methylbut-2-enyl diphosphate + 2 reduced [2Fe-2S]-[ferredoxin] + 2 H(+). The catalysed reaction is dimethylallyl diphosphate + 2 oxidized [2Fe-2S]-[ferredoxin] + H2O = (2E)-4-hydroxy-3-methylbut-2-enyl diphosphate + 2 reduced [2Fe-2S]-[ferredoxin] + 2 H(+). The protein operates within isoprenoid biosynthesis; dimethylallyl diphosphate biosynthesis; dimethylallyl diphosphate from (2E)-4-hydroxy-3-methylbutenyl diphosphate: step 1/1. It participates in isoprenoid biosynthesis; isopentenyl diphosphate biosynthesis via DXP pathway; isopentenyl diphosphate from 1-deoxy-D-xylulose 5-phosphate: step 6/6. Functionally, catalyzes the conversion of 1-hydroxy-2-methyl-2-(E)-butenyl 4-diphosphate (HMBPP) into a mixture of isopentenyl diphosphate (IPP) and dimethylallyl diphosphate (DMAPP). Acts in the terminal step of the DOXP/MEP pathway for isoprenoid precursor biosynthesis. This Anaplasma marginale (strain St. Maries) protein is 4-hydroxy-3-methylbut-2-enyl diphosphate reductase.